We begin with the raw amino-acid sequence, 244 residues long: tRNA pseudouridine synthase A (244 aa).

The Nucleophile role is filled by Asp52. Substrate is bound at residue Tyr110.

The protein belongs to the tRNA pseudouridine synthase TruA family. Homodimer.

It carries out the reaction uridine(38/39/40) in tRNA = pseudouridine(38/39/40) in tRNA. In terms of biological role, formation of pseudouridine at positions 38, 39 and 40 in the anticodon stem and loop of transfer RNAs. This chain is tRNA pseudouridine synthase A, found in Caldicellulosiruptor saccharolyticus (strain ATCC 43494 / DSM 8903 / Tp8T 6331).